Reading from the N-terminus, the 212-residue chain is Octanoyltransferase (212 aa).

The 179-residue stretch at 31–209 (AETQDEIWLV…HFADLLGYNI (179 aa)) folds into the BPL/LPL catalytic domain. Substrate contacts are provided by residues 70–77 (RGGQITYH), 138–140 (SLG), and 151–153 (GLA). C169 acts as the Acyl-thioester intermediate in catalysis.

It belongs to the LipB family.

The protein localises to the cytoplasm. It carries out the reaction octanoyl-[ACP] + L-lysyl-[protein] = N(6)-octanoyl-L-lysyl-[protein] + holo-[ACP] + H(+). Its pathway is protein modification; protein lipoylation via endogenous pathway; protein N(6)-(lipoyl)lysine from octanoyl-[acyl-carrier-protein]: step 1/2. Functionally, catalyzes the transfer of endogenously produced octanoic acid from octanoyl-acyl-carrier-protein onto the lipoyl domains of lipoate-dependent enzymes. Lipoyl-ACP can also act as a substrate although octanoyl-ACP is likely to be the physiological substrate. This chain is Octanoyltransferase, found in Haemophilus influenzae (strain PittEE).